We begin with the raw amino-acid sequence, 532 residues long: Telomerase Cajal body protein 1 (532 aa).

The segment at 1–53 (MKTSEERLLAPDSLPPDLAPAPVPQGSPAEKNTDFEPVPPPCGGDDQPQLATD) is disordered. The segment covering 13–25 (SLPPDLAPAPVPQ) has biased composition (pro residues). A phosphoserine mark is found at Ser27, Ser61, and Ser83. The disordered stretch occupies residues 80–122 (SELSPGIEEQDVSEHASLPGEETNLPELESGEATEGVSEERAE). WD repeat units follow at residues 151 to 190 (RSEN…YSEQ), 206 to 251 (EGDT…LRAS), 256 to 297 (NHLD…RDCE), 307 to 348 (GQSG…ALLG), 349 to 389 (GHQG…HLLW), and 395 to 434 (VTTN…SDDS). Thr474 bears the Phosphothreonine mark. The residue at position 476 (Ser476) is a Phosphoserine. Residues 510 to 532 (DPSSPVDDQDEKGQRRTEAVGMS) are disordered. Over residues 520-532 (EKGQRRTEAVGMS) the composition is skewed to basic and acidic residues.

This sequence belongs to the TCAB1 family. In terms of assembly, component of the telomerase holoenzyme complex composed of one molecule of TERT, one molecule of WRAP53/TCAB1, two molecules of H/ACA ribonucleoprotein complex subunits DKC1, NOP10, NHP2 and GAR1, and a telomerase RNA template component (TERC). The telomerase holoenzyme complex is associated with TEP1, SMG6/EST1A and POT1. Interacts with the chaperonin-containing T-complex (TRiC) complex; which mediates the folding of WRAP53/TCAB1. Interacts with COIL. Interacts with SMN1. Interacts with RNF8. Interacts with histone H2AX. Post-translationally, phosphorylated at Ser-61 by ATM in response to DNA damage, promoting its interaction with histone H2AX and localization to sites of DNA double-strand breaks.

The protein resides in the nucleus. The protein localises to the cajal body. Its subcellular location is the chromosome. It is found in the telomere. RNA chaperone that plays a key role in telomere maintenance and RNA localization to Cajal bodies. Specifically recognizes and binds the Cajal body box (CAB box) present in both small Cajal body RNAs (scaRNAs) and telomerase RNA template component (TERC). Essential component of the telomerase holoenzyme complex, a ribonucleoprotein complex essential for the replication of chromosome termini that elongates telomeres in most eukaryotes. In the telomerase holoenzyme complex, required to stimulate the catalytic activity of the complex. Acts by specifically binding the CAB box of the TERC RNA and controlling the folding of the CR4/CR5 region of the TERC RNA, a critical step for telomerase activity. In addition, also controls telomerase holoenzyme complex localization to Cajal body. During S phase, required for delivery of TERC to telomeres during S phase and for telomerase activity. In addition to its role in telomere maintenance, also required for Cajal body formation, probably by mediating localization of scaRNAs to Cajal bodies. Also plays a role in DNA repair: phosphorylated by ATM in response to DNA damage and relocalizes to sites of DNA double-strand breaks to promote the repair of DNA double-strand breaks. Acts by recruiting the ubiquitin ligase RNF8 to DNA breaks and promote both homologous recombination (HR) and non-homologous end joining (NHEJ). The protein is Telomerase Cajal body protein 1 of Mus musculus (Mouse).